Consider the following 219-residue polypeptide: Peroxiredoxin (219 aa).

One can recognise a Thioredoxin domain in the interval 2–164; it reads PLIGDDAPSF…IKRIVVALQK (163 aa). The active-site Cysteine sulfenic acid (-SOH) intermediate is C44. R127 provides a ligand contact to substrate. Cysteines 206 and 212 form a disulfide.

The protein belongs to the peroxiredoxin family. Prx6 subfamily. In terms of assembly, homodecamer. Pentamer of dimers that assemble into a ring structure.

The protein resides in the cytoplasm. The enzyme catalyses a hydroperoxide + [thioredoxin]-dithiol = an alcohol + [thioredoxin]-disulfide + H2O. Thiol-specific peroxidase that catalyzes the reduction of hydrogen peroxide and organic hydroperoxides to water and alcohols, respectively. Plays a role in cell protection against oxidative stress by detoxifying peroxides. The protein is Peroxiredoxin of Methanosarcina mazei (strain ATCC BAA-159 / DSM 3647 / Goe1 / Go1 / JCM 11833 / OCM 88) (Methanosarcina frisia).